We begin with the raw amino-acid sequence, 129 residues long: Ergosterol biosynthetic protein 28 (129 aa).

4 helical membrane-spanning segments follow: residues 4–24 (LGYW…FGFF), 46–66 (TFGV…FNLE), 71–91 (YLAT…EYLF), and 96–116 (TIAN…WMLL).

This sequence belongs to the ERG28 family.

The protein resides in the endoplasmic reticulum membrane. This Arabidopsis thaliana (Mouse-ear cress) protein is Ergosterol biosynthetic protein 28.